A 274-amino-acid chain; its full sequence is Large ribosomal subunit protein uL2cz/uL2cy (274 aa).

2 disordered regions span residues 1 to 26 (MAIH…KSNP) and 223 to 274 (MNPV…RRSK).

It belongs to the universal ribosomal protein uL2 family. As to quaternary structure, part of the 50S ribosomal subunit.

It localises to the plastid. The protein resides in the chloroplast. This is Large ribosomal subunit protein uL2cz/uL2cy (rpl2-A) from Daucus carota (Wild carrot).